Reading from the N-terminus, the 188-residue chain is Peptidyl-tRNA hydrolase (188 aa).

Tyrosine 18 is a tRNA binding site. The active-site Proton acceptor is the histidine 23. The tRNA site is built by tyrosine 67, asparagine 69, and asparagine 115.

It belongs to the PTH family. As to quaternary structure, monomer.

The protein resides in the cytoplasm. The catalysed reaction is an N-acyl-L-alpha-aminoacyl-tRNA + H2O = an N-acyl-L-amino acid + a tRNA + H(+). In terms of biological role, hydrolyzes ribosome-free peptidyl-tRNAs (with 1 or more amino acids incorporated), which drop off the ribosome during protein synthesis, or as a result of ribosome stalling. Its function is as follows. Catalyzes the release of premature peptidyl moieties from peptidyl-tRNA molecules trapped in stalled 50S ribosomal subunits, and thus maintains levels of free tRNAs and 50S ribosomes. This chain is Peptidyl-tRNA hydrolase, found in Salinibacter ruber (strain DSM 13855 / M31).